A 101-amino-acid polypeptide reads, in one-letter code: Large ribosomal subunit protein uL24 (101 aa).

It belongs to the universal ribosomal protein uL24 family. Part of the 50S ribosomal subunit.

In terms of biological role, one of two assembly initiator proteins, it binds directly to the 5'-end of the 23S rRNA, where it nucleates assembly of the 50S subunit. One of the proteins that surrounds the polypeptide exit tunnel on the outside of the subunit. This Streptococcus pneumoniae (strain ATCC 700669 / Spain 23F-1) protein is Large ribosomal subunit protein uL24.